A 430-amino-acid polypeptide reads, in one-letter code: MENPYEIVGVVAREILDSRGNPTVEVDVYTHVGMGRAAVPSGASTGTHEALELRDGGKRYHGKGVRRAVENVNKIIAPELIGMDVRWQREIDALLLELDGTENKSNVGANAILAVSLAVAKAAANSLELPLYQYLGGVNAYVLPVPLSNVINGGVHAGNDLDFQEFMIMPIGADSFREAIRWVSETYHVLKKVIMEKYGKNAVNVGDEGGFAPPMKEVTEPLDVLIKAIEEAGYKPGDEIALALDVASSELFNEETGKYVVGGKEYDRGELLELYKDLTSTYPIVSIEDPFHEEDWEGFVMITKELGHKVQIVGDDLFVTNPKRLRKGIELGAANALLLKVNQIGTLSEAMDAAFTAFRAGYGVIVSHRSGETEDATIADLAVALNAGQIKTGAPARSDRNAKYNQLIRIEEELEGVAVYAGKRFRKVFF.

Q164 is a (2R)-2-phosphoglycerate binding site. E208 acts as the Proton donor in catalysis. Positions 245, 288, and 315 each coordinate Mg(2+). K340, R369, S370, and K391 together coordinate (2R)-2-phosphoglycerate. The Proton acceptor role is filled by K340.

It belongs to the enolase family. Mg(2+) is required as a cofactor.

The protein localises to the cytoplasm. It is found in the secreted. Its subcellular location is the cell surface. It catalyses the reaction (2R)-2-phosphoglycerate = phosphoenolpyruvate + H2O. It participates in carbohydrate degradation; glycolysis; pyruvate from D-glyceraldehyde 3-phosphate: step 4/5. Catalyzes the reversible conversion of 2-phosphoglycerate (2-PG) into phosphoenolpyruvate (PEP). It is essential for the degradation of carbohydrates via glycolysis. The sequence is that of Enolase from Pyrococcus furiosus (strain ATCC 43587 / DSM 3638 / JCM 8422 / Vc1).